The primary structure comprises 463 residues: uncharacterized protein (463 aa).

An N-terminal signal peptide occupies residues 1–23; that stretch reads MKFSSIPIASTLLSLLVASSVTA. 2 disordered regions span residues 174 to 200 and 239 to 258; these read STYN…TKAS and GAST…QRKN.

The protein belongs to the but2 family.

It localises to the cytoplasm. This is an uncharacterized protein from Schizosaccharomyces pombe (strain 972 / ATCC 24843) (Fission yeast).